The chain runs to 495 residues: MAKRELQDKGSTEHRAKKKSRNEKHTKKAEDSQASAQSSETQYTDPKEPSPAVIEKFLEENSVKITDTLEGATKLHPITSFSHLPTCNSALYRPLESFTSPTAIQSATWPFLFSGRDVIGIAETGSGKTLGFGLPCLKNLQDSAKKGKPYKPTAVMISPTRELAMQIHDQISKFAELVDIKVACIFGGVKKEEQREALKTAAIVVATPGRLKDLQNDGSVDLGKVKYLVLDEADRMLDKGFEQDIKDIIRPMPVSKRQTVMFTATWPPVVRDLAATFMTSPVTVTIGGEPSADPRANTRIKQVVEVVKPHEKEQRLVQLLNKYQKGPSSSDKILVFCLYKKEAVRVERLLWNKGFKVAGIHGDLGQQERFKSLESFKKGVSTVLVATDVAARGLDIPSVKLVINVTFPLTVEDYVHRIGRTGRAGAEGHAITLFTEVDKAQSGALINVLKAANQDVPEDLLKFGATVKKKQHDAYGAFYKDVDTNKTSTKIVFDD.

Residues 1–14 (MAKRELQDKGSTEH) show a composition bias toward basic and acidic residues. A disordered region spans residues 1–49 (MAKRELQDKGSTEHRAKKKSRNEKHTKKAEDSQASAQSSETQYTDPKEP). A compositionally biased stretch (basic residues) spans 15–27 (RAKKKSRNEKHTK). Residues 97-105 (SFTSPTAIQ) carry the Q motif motif. Residues 109–284 (WPFLFSGRDV…ATFMTSPVTV (176 aa)) enclose the Helicase ATP-binding domain. ATP is bound at residue 122 to 129 (AETGSGKT). The short motif at 231-234 (DEAD) is the DEAD box element. Residues 315-464 (RLVQLLNKYQ…DVPEDLLKFG (150 aa)) enclose the Helicase C-terminal domain.

Belongs to the DEAD box helicase family. DDX5/DBP2 subfamily.

The protein resides in the nucleus. It is found in the nucleolus. It catalyses the reaction ATP + H2O = ADP + phosphate + H(+). In terms of biological role, ATP-dependent RNA helicase required for 60S ribosomal subunit synthesis. Involved in efficient pre-rRNA processing, predominantly at site A3, which is necessary for the normal formation of 25S and 5.8S rRNAs. The chain is ATP-dependent RNA helicase dbp3 (dbp3) from Aspergillus niger (strain ATCC MYA-4892 / CBS 513.88 / FGSC A1513).